The following is a 546-amino-acid chain: ATP synthase subunit alpha (546 aa).

173–180 (GDRQTGKT) serves as a coordination point for ATP. Residues 520 to 546 (VDKKTAPKSVTPVDQEQIKAGKAQEKK) form a disordered region. A compositionally biased stretch (basic and acidic residues) spans 535–546 (EQIKAGKAQEKK).

This sequence belongs to the ATPase alpha/beta chains family. As to quaternary structure, F-type ATPases have 2 components, CF(1) - the catalytic core - and CF(0) - the membrane proton channel. CF(1) has five subunits: alpha(3), beta(3), gamma(1), delta(1), epsilon(1). CF(0) has three main subunits: a(1), b(2) and c(9-12). The alpha and beta chains form an alternating ring which encloses part of the gamma chain. CF(1) is attached to CF(0) by a central stalk formed by the gamma and epsilon chains, while a peripheral stalk is formed by the delta and b chains.

It localises to the cell membrane. It carries out the reaction ATP + H2O + 4 H(+)(in) = ADP + phosphate + 5 H(+)(out). Its function is as follows. Produces ATP from ADP in the presence of a proton gradient across the membrane. The alpha chain is a regulatory subunit. The protein is ATP synthase subunit alpha of Bifidobacterium animalis subsp. lactis (strain AD011).